Here is a 319-residue protein sequence, read N- to C-terminus: tRNA pseudouridine synthase B (319 aa).

Asp49 (nucleophile) is an active-site residue.

Belongs to the pseudouridine synthase TruB family. Type 1 subfamily.

It carries out the reaction uridine(55) in tRNA = pseudouridine(55) in tRNA. Its function is as follows. Responsible for synthesis of pseudouridine from uracil-55 in the psi GC loop of transfer RNAs. In Bartonella henselae (strain ATCC 49882 / DSM 28221 / CCUG 30454 / Houston 1) (Rochalimaea henselae), this protein is tRNA pseudouridine synthase B.